A 414-amino-acid chain; its full sequence is Cytochrome P450 CYP105Q4 (414 aa).

The span at 1-12 (MSDTLASPSPET) shows a compositional bias: polar residues. The disordered stretch occupies residues 1–21 (MSDTLASPSPETASGIPDYPM). Positions 108, 302, 304, 361, and 363 each coordinate heme.

It belongs to the cytochrome P450 family. Requires heme as cofactor.

Functionally, can bind oleic-acid derivatives, amphotericin B like precursors and a variety of nitrogen ligand donors. This chain is Cytochrome P450 CYP105Q4, found in Mycobacterium marinum (strain ATCC BAA-535 / M).